Consider the following 373-residue polypeptide: 3 beta-hydroxysteroid dehydrogenase/Delta 5--&gt;4-isomerase type 4 (373 aa).

Y155 serves as the catalytic Proton acceptor. An NAD(+)-binding site is contributed by K159. A helical membrane pass occupies residues 288 to 308 (LPLLYWLAFLLEIVSFFLHPV). An N6-acetyllysine modification is found at K350.

It belongs to the 3-beta-HSD family. In terms of tissue distribution, skin, placenta, also detectable in ovary and adrenal gland.

Its subcellular location is the endoplasmic reticulum membrane. The protein resides in the mitochondrion membrane. It catalyses the reaction a 3beta-hydroxy-Delta(5)-steroid + NAD(+) = a 3-oxo-Delta(5)-steroid + NADH + H(+). The enzyme catalyses a 3-oxo-Delta(5)-steroid = a 3-oxo-Delta(4)-steroid. Its pathway is lipid metabolism; steroid biosynthesis. 3-beta-HSD is a bifunctional enzyme, that catalyzes the oxidative conversion of Delta(5)-ene-3-beta-hydroxy steroid, and the oxidative conversion of ketosteroids. The 3-beta-HSD enzymatic system plays a crucial role in the biosynthesis of all classes of hormonal steroids. In Rattus norvegicus (Rat), this protein is 3 beta-hydroxysteroid dehydrogenase/Delta 5--&gt;4-isomerase type 4 (Hsd3b6).